A 798-amino-acid polypeptide reads, in one-letter code: Transferrin receptor protein 2 (798 aa).

Over 1-81 (MEQRWGLLRR…WAAAGRKAAP (81 aa)) the chain is Cytoplasmic. Positions 23-26 (YRRV) match the Endocytosis signal motif. The helical; Signal-anchor for type II membrane protein transmembrane segment at 82–102 (YLVLITLLIFTGAFLLGYVAF) threads the bilayer. Topologically, residues 103 to 798 (RGSCQACGDS…GDVWNIDNNF (696 aa)) are extracellular. 3 N-linked (GlcNAc...) asparagine glycosylation sites follow: N235, N334, and N535.

It belongs to the peptidase M28 family. M28B subfamily. As to expression, predominantly expressed in liver. Also expressed in kidney, spleen, brain, lung, heart and muscle with very low expression in kidney, muscle and heart.

It localises to the cell membrane. Its subcellular location is the cytoplasm. Functionally, mediates cellular uptake of transferrin-bound iron in a non-iron dependent manner. May be involved in iron metabolism, hepatocyte function and erythrocyte differentiation. In Mus musculus (Mouse), this protein is Transferrin receptor protein 2 (Tfr2).